Reading from the N-terminus, the 280-residue chain is Protease HtpX (280 aa).

2 helical membrane passes run 7–26 (TFIL…GLLG) and 30–49 (GMLI…YWYS). Zn(2+) is bound at residue His-129. Residue Glu-130 is part of the active site. Residue His-133 participates in Zn(2+) binding. The next 2 helical transmembrane spans lie at 146-166 (ATIA…SMFG) and 178-198 (VVGM…QMAI). Position 203 (Glu-203) interacts with Zn(2+).

The protein belongs to the peptidase M48B family. Requires Zn(2+) as cofactor.

Its subcellular location is the cell inner membrane. This chain is Protease HtpX, found in Legionella pneumophila subsp. pneumophila (strain Philadelphia 1 / ATCC 33152 / DSM 7513).